The sequence spans 503 residues: uncharacterized protein (503 aa).

A helical transmembrane segment spans residues 26–46; it reads ILFLLLGLIILVNISINVATA. 4 disordered regions span residues 155 to 176, 311 to 381, 436 to 456, and 472 to 503; these read RPLSRGYPPFRKQPQGHKMSQM, YDAR…ESHE, QISDPTPPPTTFVPLSRNPGG, and VQENRGRASSLPPPSTSASRPSLHRSRTGKLN. Basic and acidic residues-rich tracts occupy residues 311-322 and 334-346; these read YDARDQWRRGTE and NPREVQGYRDHNS. The span at 348 to 367 shows a compositional bias: polar residues; that stretch reads AHRQNFSSHTHSQPNHSPPQ. Basic residues predominate over residues 493-503; the sequence is SLHRSRTGKLN.

It is found in the membrane. This is an uncharacterized protein from Mus musculus (Mouse).